Consider the following 96-residue polypeptide: Co-chaperonin GroES (96 aa).

It belongs to the GroES chaperonin family. In terms of assembly, heptamer of 7 subunits arranged in a ring. Interacts with the chaperonin GroEL.

The protein resides in the cytoplasm. Together with the chaperonin GroEL, plays an essential role in assisting protein folding. The GroEL-GroES system forms a nano-cage that allows encapsulation of the non-native substrate proteins and provides a physical environment optimized to promote and accelerate protein folding. GroES binds to the apical surface of the GroEL ring, thereby capping the opening of the GroEL channel. The sequence is that of Co-chaperonin GroES from Shewanella piezotolerans (strain WP3 / JCM 13877).